Reading from the N-terminus, the 264-residue chain is Methionine aminopeptidase (264 aa).

His-79 provides a ligand contact to substrate. A divalent metal cation contacts are provided by Asp-97, Asp-108, and His-171. Substrate is bound at residue His-178. 2 residues coordinate a divalent metal cation: Glu-204 and Glu-235.

This sequence belongs to the peptidase M24A family. Methionine aminopeptidase type 1 subfamily. As to quaternary structure, monomer. Co(2+) is required as a cofactor. It depends on Zn(2+) as a cofactor. Requires Mn(2+) as cofactor. Fe(2+) serves as cofactor.

The catalysed reaction is Release of N-terminal amino acids, preferentially methionine, from peptides and arylamides.. Removes the N-terminal methionine from nascent proteins. The N-terminal methionine is often cleaved when the second residue in the primary sequence is small and uncharged (Met-Ala-, Cys, Gly, Pro, Ser, Thr, or Val). Requires deformylation of the N(alpha)-formylated initiator methionine before it can be hydrolyzed. In Escherichia coli O157:H7, this protein is Methionine aminopeptidase.